The primary structure comprises 299 residues: Superkiller complex protein 8 (299 aa).

WD repeat units follow at residues 11–48 (AHED…FLTE), 54–93 (KHIL…LHKT), 96–135 (SGPL…KLRS), 138–177 (NTNK…RVSE), 180–219 (AHGV…PYIA), 223–263 (GHSS…LDSS), and 266–299 (AHAD…ALKQ).

It belongs to the SKI8 family.

This Dictyostelium discoideum (Social amoeba) protein is Superkiller complex protein 8 (skic8).